The following is a 114-amino-acid chain: Large ribosomal subunit protein bL17 (114 aa).

Belongs to the bacterial ribosomal protein bL17 family. As to quaternary structure, part of the 50S ribosomal subunit. Contacts protein L32.

The polypeptide is Large ribosomal subunit protein bL17 (Clostridium acetobutylicum (strain ATCC 824 / DSM 792 / JCM 1419 / IAM 19013 / LMG 5710 / NBRC 13948 / NRRL B-527 / VKM B-1787 / 2291 / W)).